A 389-amino-acid chain; its full sequence is Phospho-N-acetylmuramoyl-pentapeptide-transferase (389 aa).

The next 10 membrane-spanning stretches (helical) occupy residues 25–45 (RAVM…PWVI), 73–93 (TMGG…WGDL), 97–117 (FIWI…VDDY), 135–155 (FWQS…VSEA), 190–210 (ISYP…IVGA), 222–242 (GLVI…AYVM), 258–278 (GAGE…AFLW), 286–306 (VFMG…VAVI), 311–331 (IVLF…MLQV), and 366–386 (QVVV…LSTL).

It belongs to the glycosyltransferase 4 family. MraY subfamily. Requires Mg(2+) as cofactor.

The protein localises to the cell inner membrane. It catalyses the reaction UDP-N-acetyl-alpha-D-muramoyl-L-alanyl-gamma-D-glutamyl-meso-2,6-diaminopimeloyl-D-alanyl-D-alanine + di-trans,octa-cis-undecaprenyl phosphate = di-trans,octa-cis-undecaprenyl diphospho-N-acetyl-alpha-D-muramoyl-L-alanyl-D-glutamyl-meso-2,6-diaminopimeloyl-D-alanyl-D-alanine + UMP. It functions in the pathway cell wall biogenesis; peptidoglycan biosynthesis. Catalyzes the initial step of the lipid cycle reactions in the biosynthesis of the cell wall peptidoglycan: transfers peptidoglycan precursor phospho-MurNAc-pentapeptide from UDP-MurNAc-pentapeptide onto the lipid carrier undecaprenyl phosphate, yielding undecaprenyl-pyrophosphoryl-MurNAc-pentapeptide, known as lipid I. This chain is Phospho-N-acetylmuramoyl-pentapeptide-transferase, found in Burkholderia ambifaria (strain ATCC BAA-244 / DSM 16087 / CCUG 44356 / LMG 19182 / AMMD) (Burkholderia cepacia (strain AMMD)).